Consider the following 255-residue polypeptide: 4-diphosphocytidyl-2-C-methyl-D-erythritol kinase (255 aa).

The active site involves Lys6. ATP is bound at residue 95–105 (PVCAGLGGGSS). Asp137 is a catalytic residue.

It belongs to the GHMP kinase family. IspE subfamily.

It carries out the reaction 4-CDP-2-C-methyl-D-erythritol + ATP = 4-CDP-2-C-methyl-D-erythritol 2-phosphate + ADP + H(+). Its pathway is isoprenoid biosynthesis; isopentenyl diphosphate biosynthesis via DXP pathway; isopentenyl diphosphate from 1-deoxy-D-xylulose 5-phosphate: step 3/6. In terms of biological role, catalyzes the phosphorylation of the position 2 hydroxy group of 4-diphosphocytidyl-2C-methyl-D-erythritol. The chain is 4-diphosphocytidyl-2-C-methyl-D-erythritol kinase from Campylobacter jejuni subsp. doylei (strain ATCC BAA-1458 / RM4099 / 269.97).